Here is a 599-residue protein sequence, read N- to C-terminus: NADH-ubiquinone oxidoreductase chain 5 (599 aa).

The next 16 membrane-spanning stretches (helical) occupy residues 1 to 21 (MLEL…IFLF), 28 to 48 (FAES…ILLM), 81 to 101 (CFFV…FYYM), 115 to 135 (GLFL…QLLI), 171 to 191 (GDIG…DWSF), 193 to 213 (GLYA…LAAA), 233 to 253 (TPVS…FLLI), 265 to 285 (IQLM…ICAL), 302 to 322 (LGLM…FLHI), 323 to 343 (CMHA…IHGL), 363 to 383 (SVCF…AGFF), 398 to 420 (NSWA…VRLL), 455 to 475 (VIAG…CLSL), 481 to 501 (LAAV…VNLL), 510 to 530 (IPEL…HKLI), and 577 to 597 (LIKM…GIMI).

Belongs to the complex I subunit 5 family.

It localises to the mitochondrion inner membrane. It carries out the reaction a ubiquinone + NADH + 5 H(+)(in) = a ubiquinol + NAD(+) + 4 H(+)(out). Its function is as follows. Core subunit of the mitochondrial membrane respiratory chain NADH dehydrogenase (Complex I) that is believed to belong to the minimal assembly required for catalysis. Complex I functions in the transfer of electrons from NADH to the respiratory chain. The immediate electron acceptor for the enzyme is believed to be ubiquinone. The chain is NADH-ubiquinone oxidoreductase chain 5 (ND5) from Branchiostoma floridae (Florida lancelet).